Consider the following 125-residue polypeptide: Cysteine proteinase inhibitor 3 (125 aa).

A signal peptide spans 1–22; the sequence is MESKTFWIVTLLLCGTIQLAIC. The Cystatin domain maps to 36 to 124; that stretch reads GGVHDLRGNQ…KQLQEFKESS (89 aa). The short motif at 80–84 is the Secondary area of contact element; that stretch reads QVVAG.

Belongs to the cystatin family. Phytocystatin subfamily.

The protein localises to the secreted. Functionally, specific inhibitor of cysteine proteinases. Probably involved in the regulation of endogenous processes and in defense against pests and pathogens. This Arabidopsis thaliana (Mouse-ear cress) protein is Cysteine proteinase inhibitor 3 (CYS3).